The primary structure comprises 643 residues: Phosphomethylpyrimidine synthase (643 aa).

Residues Asn-248, Met-277, Tyr-306, His-342, 362 to 364, 403 to 406, and Glu-442 contribute to the substrate site; these read SRG and DGLR. Zn(2+) is bound at residue His-446. Tyr-469 serves as a coordination point for substrate. His-510 lines the Zn(2+) pocket. [4Fe-4S] cluster-binding residues include Cys-590, Cys-593, and Cys-598.

Belongs to the ThiC family. In terms of assembly, homodimer. [4Fe-4S] cluster is required as a cofactor.

The enzyme catalyses 5-amino-1-(5-phospho-beta-D-ribosyl)imidazole + S-adenosyl-L-methionine = 4-amino-2-methyl-5-(phosphooxymethyl)pyrimidine + CO + 5'-deoxyadenosine + formate + L-methionine + 3 H(+). The protein operates within cofactor biosynthesis; thiamine diphosphate biosynthesis. Functionally, catalyzes the synthesis of the hydroxymethylpyrimidine phosphate (HMP-P) moiety of thiamine from aminoimidazole ribotide (AIR) in a radical S-adenosyl-L-methionine (SAM)-dependent reaction. This is Phosphomethylpyrimidine synthase from Burkholderia ambifaria (strain ATCC BAA-244 / DSM 16087 / CCUG 44356 / LMG 19182 / AMMD) (Burkholderia cepacia (strain AMMD)).